The sequence spans 1038 residues: Translation initiation factor IF-2 (1038 aa).

A disordered region spans residues 32–442; that stretch reads GSALASLSDE…RKGVNTAAPR (411 aa). Low complexity-rich tracts occupy residues 65–77, 100–113, and 131–147; these read PPTK…PVAP, PAEA…PAQP, and PKLA…APAA. 2 stretches are compositionally biased toward basic and acidic residues: residues 204 to 217 and 275 to 295; these read SGGR…KRES and RSLD…DAGK. The segment covering 311 to 328 has biased composition (low complexity); sequence PSAPAKPAAPTGSSGPAA. The span at 331–344 shows a compositional bias: basic and acidic residues; that stretch reads PDIKLTRDVIEGHK. Residues 422–435 are compositionally biased toward basic residues; that stretch reads HHYRRSRPRIRRKG. The 168-residue stretch at 529-696 folds into the tr-type G domain; it reads ARPPVVTFLG…TLLTIAELNE (168 aa). Positions 538 to 545 are G1; sequence GHVDHGKT. 538–545 lines the GTP pocket; sequence GHVDHGKT. Residues 563 to 567 are G2; the sequence is GITQH. The segment at 584–587 is G3; that stretch reads DTPG. GTP is bound by residues 584-588 and 638-641; these read DTPGH and NKID. The tract at residues 638-641 is G4; sequence NKID. The G5 stretch occupies residues 674–676; that stretch reads SAT.

It belongs to the TRAFAC class translation factor GTPase superfamily. Classic translation factor GTPase family. IF-2 subfamily.

The protein resides in the cytoplasm. In terms of biological role, one of the essential components for the initiation of protein synthesis. Protects formylmethionyl-tRNA from spontaneous hydrolysis and promotes its binding to the 30S ribosomal subunits. Also involved in the hydrolysis of GTP during the formation of the 70S ribosomal complex. The sequence is that of Translation initiation factor IF-2 from Rhodopirellula baltica (strain DSM 10527 / NCIMB 13988 / SH1).